The sequence spans 229 residues: 2-C-methyl-D-erythritol 4-phosphate cytidylyltransferase (229 aa).

This sequence belongs to the IspD/TarI cytidylyltransferase family. IspD subfamily.

It catalyses the reaction 2-C-methyl-D-erythritol 4-phosphate + CTP + H(+) = 4-CDP-2-C-methyl-D-erythritol + diphosphate. It participates in isoprenoid biosynthesis; isopentenyl diphosphate biosynthesis via DXP pathway; isopentenyl diphosphate from 1-deoxy-D-xylulose 5-phosphate: step 2/6. In terms of biological role, catalyzes the formation of 4-diphosphocytidyl-2-C-methyl-D-erythritol from CTP and 2-C-methyl-D-erythritol 4-phosphate (MEP). This is 2-C-methyl-D-erythritol 4-phosphate cytidylyltransferase from Clostridium botulinum (strain Loch Maree / Type A3).